A 278-amino-acid chain; its full sequence is Glutamate racemase (278 aa).

Substrate is bound by residues 13–14 and 45–46; these read DS and YG. Cys76 serves as the catalytic Proton donor/acceptor. 77–78 lines the substrate pocket; that stretch reads NT. The Proton donor/acceptor role is filled by Cys185. Substrate is bound at residue 186–187; that stretch reads TH.

It belongs to the aspartate/glutamate racemases family.

It catalyses the reaction L-glutamate = D-glutamate. The protein operates within cell wall biogenesis; peptidoglycan biosynthesis. Functionally, provides the (R)-glutamate required for cell wall biosynthesis. In Gloeothece citriformis (strain PCC 7424) (Cyanothece sp. (strain PCC 7424)), this protein is Glutamate racemase.